We begin with the raw amino-acid sequence, 203 residues long: MNSERTAEAIPHADPLSIFESWFAEARASEPNDPNAMALATATAEGVPSVRMVLLKGHGPDGFVFYTNLQSRKGGELAANHHVALLFHWKSLRRQIRIEGTIAKVTPAEADAYFASRHPESRLGSAASDQSRPLPDRQTYLDRVDALRAQYPDGNVPRPAHWSGYRVTPSAIEFWQDRDFRLHERRRFLADGQGGWTSTLLYP.

Residues 51 to 56, 66 to 67, arginine 72, lysine 73, and glutamine 95 each bind FMN; these read RMVLLK and YT. Lysine 56 lines the substrate pocket. 3 residues coordinate substrate: tyrosine 113, arginine 117, and serine 121. Residues 130–131 and tryptophan 175 each bind FMN; that span reads QS. 181-183 contributes to the substrate binding site; sequence RLH. Residue arginine 185 coordinates FMN.

The protein belongs to the pyridoxamine 5'-phosphate oxidase family. In terms of assembly, homodimer. FMN serves as cofactor.

The enzyme catalyses pyridoxamine 5'-phosphate + O2 + H2O = pyridoxal 5'-phosphate + H2O2 + NH4(+). The catalysed reaction is pyridoxine 5'-phosphate + O2 = pyridoxal 5'-phosphate + H2O2. The protein operates within cofactor metabolism; pyridoxal 5'-phosphate salvage; pyridoxal 5'-phosphate from pyridoxamine 5'-phosphate: step 1/1. It participates in cofactor metabolism; pyridoxal 5'-phosphate salvage; pyridoxal 5'-phosphate from pyridoxine 5'-phosphate: step 1/1. Functionally, catalyzes the oxidation of either pyridoxine 5'-phosphate (PNP) or pyridoxamine 5'-phosphate (PMP) into pyridoxal 5'-phosphate (PLP). The protein is Pyridoxine/pyridoxamine 5'-phosphate oxidase of Novosphingobium aromaticivorans (strain ATCC 700278 / DSM 12444 / CCUG 56034 / CIP 105152 / NBRC 16084 / F199).